A 227-amino-acid polypeptide reads, in one-letter code: Zinc finger protein 511 (227 aa).

C2H2-type zinc fingers lie at residues 80 to 105, 107 to 130, and 144 to 169; these read FTCQ…HMMH, NTCS…LEWH, and YQCL…VRLH. A disordered region spans residues 180-204; sequence PKTNRGPAMPAAADAATRAPTDDSD. Low complexity predominate over residues 186 to 198; that stretch reads PAMPAAADAATRA.

The protein belongs to the krueppel C2H2-type zinc-finger protein family.

The protein resides in the nucleus. Its function is as follows. May be involved in transcriptional regulation. The sequence is that of Zinc finger protein 511 (Znf511) from Mus musculus (Mouse).